A 540-amino-acid polypeptide reads, in one-letter code: E3 ubiquitin-protein ligase rnf8-A (540 aa).

The FHA domain maps to 30 to 84 (VTLGRGLGVTYQLKPTLCPLMISRTHCLFKQNTGGEWTVTDNKSLNGVWRNKERL). Positions 128–205 (LIRPLPDKTK…SGTESRLNDS (78 aa)) are disordered. 2 stretches are compositionally biased toward polar residues: residues 152 to 162 (ASGNEGPSNFS) and 179 to 200 (SSHTTDLYKQPTVEPTASGTES). An RING-type zinc finger spans residues 382–420 (CIICSEHFIEAVTLNCAHSFCSYCIKSWKKRKEECPICR). The disordered stretch occupies residues 517–540 (GTDELDSSDFESDDDEEEDSFLII). Residues 519–540 (DELDSSDFESDDDEEEDSFLII) show a composition bias toward acidic residues.

The protein belongs to the RNF8 family. Homodimer. Forms a E2-E3 ubiquitin ligase complex composed of the rnf8 homodimer and a E2 heterodimer of ube2n and ube2v2.

The protein localises to the nucleus. The catalysed reaction is S-ubiquitinyl-[E2 ubiquitin-conjugating enzyme]-L-cysteine + [acceptor protein]-L-lysine = [E2 ubiquitin-conjugating enzyme]-L-cysteine + N(6)-ubiquitinyl-[acceptor protein]-L-lysine.. Its pathway is protein modification; protein ubiquitination. E3 ubiquitin-protein ligase that plays a key role in DNA damage signaling via 2 distinct roles: by mediating the 'Lys-63'-linked ubiquitination of histones H2A and H2AX and promoting the recruitment of DNA repair proteins at double-strand breaks (DSBs) sites, and by catalyzing 'Lys-48'-linked ubiquitination to remove target proteins from DNA damage sites. Following DNA DSBs, it is recruited to the sites of damage by ATM-phosphorylated mdc1 and catalyzes the 'Lys-63'-linked ubiquitination of histones H2A and H2AX, thereby promoting the formation of tp53bp1 and brca1 ionizing radiation-induced foci (IRIF). H2A ubiquitination also mediates the ATM-dependent transcriptional silencing at regions flanking DSBs in cis, a mechanism to avoid collision between transcription and repair intermediates. Also catalyzes the formation of 'Lys-48'-linked polyubiquitin chains, leading to degradation of substrate proteins. In addition to its function in damage signaling, also plays a role in higher-order chromatin structure by mediating extensive chromatin decondensation. The polypeptide is E3 ubiquitin-protein ligase rnf8-A (Xenopus laevis (African clawed frog)).